The chain runs to 344 residues: Heat-inducible transcription repressor HrcA (344 aa).

This sequence belongs to the HrcA family.

Functionally, negative regulator of class I heat shock genes (grpE-dnaK-dnaJ and groELS operons). Prevents heat-shock induction of these operons. The sequence is that of Heat-inducible transcription repressor HrcA from Aster yellows witches'-broom phytoplasma (strain AYWB).